The sequence spans 351 residues: UPF0764 protein C16orf89 homolog (351 aa).

The signal sequence occupies residues 1-25; it reads MKSLKMLYPLFMLLVLSSKIDLSNQ.

It belongs to the UPF0764 family. Homodimer.

The protein localises to the secreted. In Danio rerio (Zebrafish), this protein is UPF0764 protein C16orf89 homolog.